Consider the following 768-residue polypeptide: DNA ligase 1 (768 aa).

The interval 42–139 (VEVSQSSSDS…KEPPLESNAR (98 aa)) is disordered. Residues 52–99 (KNVDGRSTSEKRKVESVKLVDESKHNNHDDTGTQNVERENNIVSEAKK) are compositionally biased toward basic and acidic residues. A compositionally biased stretch (low complexity) spans 104–124 (GSSSSSSDAVSSNNDSGASTP). Residues 309 to 318 (KLRLQLAEKT) form an interaction with target DNA region. E414 provides a ligand contact to ATP. K416 (N6-AMP-lysine intermediate) is an active-site residue. 2 residues coordinate ATP: R421 and R437. E469 contacts Mg(2+). The segment at 490 to 492 (KRK) is interaction with target DNA. Mg(2+) is bound at residue E568. Residues K573, R587, and K593 each contribute to the ATP site.

This sequence belongs to the ATP-dependent DNA ligase family. It depends on Mg(2+) as a cofactor.

It is found in the nucleus. It carries out the reaction ATP + (deoxyribonucleotide)n-3'-hydroxyl + 5'-phospho-(deoxyribonucleotide)m = (deoxyribonucleotide)n+m + AMP + diphosphate.. DNA ligase that seals nicks in double-stranded DNA during DNA replication, DNA recombination and DNA repair. The polypeptide is DNA ligase 1 (cdc17) (Schizosaccharomyces pombe (strain 972 / ATCC 24843) (Fission yeast)).